Here is a 92-residue protein sequence, read N- to C-terminus: Acylphosphatase (92 aa).

In terms of domain architecture, Acylphosphatase-like spans 3 to 90 (RVHVLVAGRV…GEFTEFAVLR (88 aa)). Active-site residues include Arg18 and Asn36.

Belongs to the acylphosphatase family.

It carries out the reaction an acyl phosphate + H2O = a carboxylate + phosphate + H(+). The sequence is that of Acylphosphatase (acyP) from Methylococcus capsulatus (strain ATCC 33009 / NCIMB 11132 / Bath).